A 156-amino-acid polypeptide reads, in one-letter code: Ribosomal RNA large subunit methyltransferase H (156 aa).

S-adenosyl-L-methionine is bound by residues Leu73, Gly104, and 123 to 128 (LSALTL).

The protein belongs to the RNA methyltransferase RlmH family. Homodimer.

It localises to the cytoplasm. It carries out the reaction pseudouridine(1915) in 23S rRNA + S-adenosyl-L-methionine = N(3)-methylpseudouridine(1915) in 23S rRNA + S-adenosyl-L-homocysteine + H(+). In terms of biological role, specifically methylates the pseudouridine at position 1915 (m3Psi1915) in 23S rRNA. This is Ribosomal RNA large subunit methyltransferase H from Shewanella sp. (strain ANA-3).